The sequence spans 90 residues: Probable Fe(2+)-trafficking protein (90 aa).

The protein belongs to the Fe(2+)-trafficking protein family.

Could be a mediator in iron transactions between iron acquisition and iron-requiring processes, such as synthesis and/or repair of Fe-S clusters in biosynthetic enzymes. This is Probable Fe(2+)-trafficking protein from Delftia acidovorans (strain DSM 14801 / SPH-1).